A 98-amino-acid chain; its full sequence is Acylphosphatase (98 aa).

The Acylphosphatase-like domain maps to 12-98 (TYYVRVRGVV…DKRFERFQQH (87 aa)). Residues R27 and N45 contribute to the active site.

Belongs to the acylphosphatase family.

It catalyses the reaction an acyl phosphate + H2O = a carboxylate + phosphate + H(+). In Burkholderia mallei (strain NCTC 10247), this protein is Acylphosphatase (acyP).